The chain runs to 102 residues: MEIKQIAVAGSLESSDMMITISPNDGQGIVLELDSNVEKQFGNHIRALIKTTLARLGVESATIEAVDKGALDCTIQARTIAAVHRAAGVEHYNWKEIDSWNA.

The residue at position 14 (serine 14) is an O-(phosphoribosyl dephospho-coenzyme A)serine.

This sequence belongs to the CitD family. Oligomer with a subunit composition of (alpha,beta,gamma)6.

It is found in the cytoplasm. Its function is as follows. Covalent carrier of the coenzyme of citrate lyase. The protein is Citrate lyase acyl carrier protein of Streptococcus equi subsp. zooepidemicus (strain MGCS10565).